Reading from the N-terminus, the 536-residue chain is Pre-mRNA 3'-end-processing factor FIP1 (536 aa).

2 stretches are compositionally biased toward basic and acidic residues: residues 1–10 (MSAGEVERLV) and 32–42 (VHVHSDLAKDL). 3 disordered regions span residues 1-95 (MSAG…EDDV), 212-246 (VQQG…GLPP), and 300-536 (FPPG…APAE). Residues 1 to 110 (MSAGEVERLV…DIKTGAPQYG (110 aa)) are sufficient for interaction with PAPOLA. Positions 1–296 (MSAGEVERLV…TEVDNNFSKP (296 aa)) are necessary for stimulating PAPOLA activity. Composition is skewed to acidic residues over residues 43 to 54 (DENEVERPEEEN) and 80 to 94 (TEDD…DEDD). Ser84, Ser86, and Ser88 each carry phosphoserine. Positions 136 to 219 (KGVDLDAPGS…ITVQQGRTGN (84 aa)) are sufficient for interaction with CPSF4. Over residues 300–344 (FPPGAPPTHLPPPPFLPPPPTVSTAPPLIPPPGFPPPPGAPPPSL) the composition is skewed to pro residues. Tyr366 carries the phosphotyrosine modification. The segment covering 374 to 390 (LTSSAPSWPSLVDTTKQ) has biased composition (polar residues). The tract at residues 383–536 (SLVDTTKQWD…QESTEAAPAE (154 aa)) is sufficient for interaction with CPSF1 and CSTF3. Residues 394-434 (YARREKDRDRDRERDRDRERERDRDRERERTRERERERDHS) are compositionally biased toward basic and acidic residues. The segment at 397–432 (REKDRDRDRERDRDRERERDRDRERERTRERERERD) is arg/Asp/Glu-rich domain. Ser434 is subject to Phosphoserine. Residue Thr436 is modified to Phosphothreonine. A phosphoserine mark is found at Ser438 and Ser442. A compositionally biased stretch (basic and acidic residues) spans 443-470 (DEERYRYREYAERGYERHRASREKEERH). Positions 484–493 (KSSRSNSRRR) are enriched in basic residues. Ser496 carries the post-translational modification Phosphoserine. A compositionally biased stretch (basic residues) spans 502–512 (HRRHKHKKSKR).

Belongs to the FIP1 family. As to quaternary structure, component of the cleavage and polyadenylation specificity factor (CPSF) complex, composed of CPSF1, CPSF2, CPSF3, CPSF4 and FIP1L1. Found in a complex with CPSF1, FIP1L1 and PAPOLA. Interacts with CPSF1, CPSF4, CSTF2 and CSTF3. Interacts with AHCYL1 (when phosphorylated); the interaction is direct and associates AHCYL1 with the CPSF complex and RNA. Interacts with PAPOLA; the interaction seems to be increased by the interaction with AHCYL1. Interacts with NUDT21/CPSF5; this interaction occurs in a RNA sequence-specific manner. Interacts (preferentially via unphosphorylated form and Arg/Glu/Asp-rich domain) with CPSF6 (via Arg/Ser-rich domain); this interaction mediates, at least in part, the interaction between the CFIm and CPSF complexes and may be inhibited by CPSF6 hyper-phosphorylation. Interacts (preferentially via unphosphorylated form and Arg/Asp/Glu-rich domain) with CPSF7 (via Arg/Ser-rich domain); this interaction mediates, at least in part, the interaction between the CFIm and CPSF complexes and may be inhibited by CPSF7 hyper-phosphorylation.

The protein localises to the nucleus. Component of the cleavage and polyadenylation specificity factor (CPSF) complex that plays a key role in pre-mRNA 3'-end formation, recognizing the AAUAAA signal sequence and interacting with poly(A) polymerase and other factors to bring about cleavage and poly(A) addition. FIP1L1 contributes to poly(A) site recognition and stimulates poly(A) addition. Binds to U-rich RNA sequence elements surrounding the poly(A) site. May act to tether poly(A) polymerase to the CPSF complex. In Rattus norvegicus (Rat), this protein is Pre-mRNA 3'-end-processing factor FIP1 (Fip1l1).